A 356-amino-acid chain; its full sequence is Glutamine synthetase nodule isozyme (356 aa).

Residues 19-99 (IIAEYIWIGG…VMCDAYTPAG (81 aa)) form the GS beta-grasp domain. Positions 41–66 (PGPVSDPSKLPKWNYDGSSTGQAPGE) are disordered. One can recognise a GS catalytic domain in the interval 106–356 (KRHNAAKIFS…IADTTILWKP (251 aa)).

Belongs to the glutamine synthetase family. Homooctamer.

It localises to the cytoplasm. The enzyme catalyses L-glutamate + NH4(+) + ATP = L-glutamine + ADP + phosphate + H(+). The polypeptide is Glutamine synthetase nodule isozyme (Vigna aconitifolia (Moth bean)).